We begin with the raw amino-acid sequence, 81 residues long: Small ribosomal subunit protein bS20 (81 aa).

A compositionally biased stretch (basic residues) spans 1-11 (MPNIKSQKKRV). The segment at 1–20 (MPNIKSQKKRVLTNEKSRAS) is disordered.

Belongs to the bacterial ribosomal protein bS20 family.

Binds directly to 16S ribosomal RNA. In Mesoplasma florum (strain ATCC 33453 / NBRC 100688 / NCTC 11704 / L1) (Acholeplasma florum), this protein is Small ribosomal subunit protein bS20.